We begin with the raw amino-acid sequence, 388 residues long: tRNA (guanine-N(7)-)-methyltransferase (388 aa).

Glu-129, Glu-154, and Asp-181 together coordinate S-adenosyl-L-methionine. Substrate-binding residues include Lys-207 and Asp-237.

Belongs to the class I-like SAM-binding methyltransferase superfamily. TrmB family.

The catalysed reaction is guanosine(46) in tRNA + S-adenosyl-L-methionine = N(7)-methylguanosine(46) in tRNA + S-adenosyl-L-homocysteine. Its pathway is tRNA modification; N(7)-methylguanine-tRNA biosynthesis. In terms of biological role, catalyzes the formation of N(7)-methylguanine at position 46 (m7G46) in tRNA. The chain is tRNA (guanine-N(7)-)-methyltransferase from Wolinella succinogenes (strain ATCC 29543 / DSM 1740 / CCUG 13145 / JCM 31913 / LMG 7466 / NCTC 11488 / FDC 602W) (Vibrio succinogenes).